The primary structure comprises 230 residues: Large ribosomal subunit protein uL1 (230 aa).

The protein belongs to the universal ribosomal protein uL1 family. In terms of assembly, part of the 50S ribosomal subunit.

Its function is as follows. Binds directly to 23S rRNA. The L1 stalk is quite mobile in the ribosome, and is involved in E site tRNA release. Protein L1 is also a translational repressor protein, it controls the translation of the L11 operon by binding to its mRNA. This chain is Large ribosomal subunit protein uL1, found in Sulfurimonas denitrificans (strain ATCC 33889 / DSM 1251) (Thiomicrospira denitrificans (strain ATCC 33889 / DSM 1251)).